The chain runs to 288 residues: MAKDIEASAPEGGEFSAKDYTDPPPAPLIDVEELTKWSLYRAVIAEFIATLLFLYITVATVIGYKHQSDATVNTTDAACSGVGILGIAWAFGGMIFILVYCTAGISGGHINPAVTFGLFLARKVSLIRAVLYIIAQCLGAICGVGLVKGFQSSYYARYGGGANELSDGYSKGTGLGAEIIGTFVLVYTVFSATDPKRNARDSHIPVLAPLPIGFAVFMVHLATIPITGTGINPARSLGTAVIYNKDKAWDDQWIFWVGPLIGAAIAAAYHQYVLRASAAKLGSYRSNA.

Residues M1 to T21 form a disordered region. Transmembrane regions (helical) follow at residues A42–I62 and G81–C101. Residues N111–A113 carry the NPA 1 motif. The next 3 membrane-spanning stretches (helical) occupy residues V130 to F150, G172 to A192, and I204 to I224. The NPA 2 signature appears at N232–A234. A helical membrane pass occupies residues I254–L274.

The protein belongs to the MIP/aquaporin (TC 1.A.8) family. PIP (TC 1.A.8.11) subfamily. Expressed in roots, leaves and anthers.

The protein localises to the cell membrane. Functionally, aquaporins facilitate the transport of water and small neutral solutes across cell membranes. This Oryza sativa subsp. japonica (Rice) protein is Probable aquaporin PIP2-2 (PIP2-2).